The primary structure comprises 89 residues: ATP synthase subunit c, sodium ion specific (89 aa).

2 consecutive transmembrane segments (helical) span residues 9 to 29 (VVLAASAVGAGAAMIAGIGPG) and 68 to 88 (GIYSLVIALILLYANPFVGLL).

This sequence belongs to the ATPase C chain family. In terms of assembly, F-type ATPases have 2 components, F(1) - the catalytic core - and F(0) - the membrane sodium channel. F(1) has five subunits: alpha(3), beta(3), gamma(1), delta(1), epsilon(1). F(0) has three main subunits: a(1), b(2) and c(10-14). The alpha and beta chains form an alternating ring which encloses part of the gamma chain. F(1) is attached to F(0) by a central stalk formed by the gamma and epsilon chains, while a peripheral stalk is formed by the delta and b chains.

Its subcellular location is the cell membrane. In terms of biological role, f(1)F(0) ATP synthase produces ATP from ADP in the presence of a proton or sodium gradient. F-type ATPases consist of two structural domains, F(1) containing the extramembraneous catalytic core and F(0) containing the membrane sodium channel, linked together by a central stalk and a peripheral stalk. During catalysis, ATP synthesis in the catalytic domain of F(1) is coupled via a rotary mechanism of the central stalk subunits to sodium translocation. Functionally, key component of the F(0) channel; it plays a direct role in translocation across the membrane. A homomeric c-ring of between 10-14 subunits forms the central stalk rotor element with the F(1) delta and epsilon subunits. The sequence is that of ATP synthase subunit c, sodium ion specific (atpE) from Propionigenium modestum.